A 1311-amino-acid polypeptide reads, in one-letter code: Suppressor of presenilin protein 4 (1311 aa).

Polar residues predominate over residues 1–11 (MSSEPTSSIES). Disordered stretches follow at residues 1–58 (MSSE…DDLN) and 75–95 (MFEDDEEDTVSRRRTRRSTAH). 2 C2H2-type zinc fingers span residues 112–134 (HACHKCPSRYESKSSLANHTKMH) and 141–163 (FACELCDFSASTLKSLTHHNNIH). A disordered region spans residues 226 to 304 (EFDTTPPPIL…PPPVRKDVEK (79 aa)). Residues 280 to 293 (SPKGSLPSSSASSV) show a composition bias toward low complexity. 4 consecutive C2H2-type zinc fingers follow at residues 327–349 (QRCPHCPFTTSTVTRLNRHSGGH), 355–379 (YICPSENCNFMCRKAGFLQKHYILH), 451–476 (KKCNIGECEFLTQTLTQLIVHKVKTH), and 487–510 (FLCLTCGHRAKSYAALRTHKLIEH). Residues 544 to 563 (VKEEPKEADGDESGDESFDS) are disordered. The segment covering 552 to 561 (DGDESGDESF) has biased composition (acidic residues). 6 C2H2-type zinc fingers span residues 585 to 607 (FCCNMCPYKAPTMNRCQRHYDKH), 613 to 635 (FKCQYCSWSSRSKEVIVNHEKLH), 709 to 731 (FQCTDCPYTSKYRGDMRSHKKRH), 737 to 759 (YRCVQCTYTTNRPVSLKDHLKQH), 794 to 816 (YCCDKCPYVTLALGCLWRHHRNH), and 823 to 845 (NICSNCSYSSIDQRKMEEHTIIH). The interval 865–1002 (RPVSSLTDLN…ESPEPDESVE (138 aa)) is disordered. Over residues 874 to 897 (NSEKMNERKSTKRKMLDKVEKMEV) the composition is skewed to basic and acidic residues. The segment covering 898 to 907 (GEDEEDDEES) has biased composition (acidic residues). The span at 908–920 (VDKGTDDGDYKQR) shows a compositional bias: basic and acidic residues. Over residues 956–979 (NRINYSLLSKNGSGKPTPSTSSAN) the composition is skewed to polar residues. 6 consecutive C2H2-type zinc fingers follow at residues 1022–1044 (LKCPDCPYKSSEPDVLEKHRYYH), 1053–1075 (YACSDCTFNTYTPTALLQHLKLH), 1104–1126 (YYCKNCSFKTSIHRNFIEHSAYH), 1162–1184 (KYCKKCTFKCVSQSNFIEHLDRH), 1190–1212 (YKCYSCDYSDNTKSVVDFHQLNH), and 1261–1284 (LKCPSCEYFCHVSSELAFHMSVHH).

In terms of tissue distribution, expressed in neurons.

The protein localises to the nucleus. Functionally, probable transcriptional regulator, which participates in the transcriptional repression of the presenilin protein hop-1. Might play a role in the oxidative stress response. This chain is Suppressor of presenilin protein 4 (spr-4), found in Caenorhabditis elegans.